A 202-amino-acid chain; its full sequence is Na(+)-translocating NADH-quinone reductase subunit E (202 aa).

The next 6 membrane-spanning stretches (helical) occupy residues 11–31 (SVFI…FLAV), 35–55 (VTTA…SVPA), 79–99 (LSFL…QILE), 114–134 (GIFL…AFMV), 144–164 (LVFG…LAAV), and 180–200 (LGIT…FSGV).

This sequence belongs to the NqrDE/RnfAE family. As to quaternary structure, composed of six subunits; NqrA, NqrB, NqrC, NqrD, NqrE and NqrF.

Its subcellular location is the cell inner membrane. It catalyses the reaction a ubiquinone + n Na(+)(in) + NADH + H(+) = a ubiquinol + n Na(+)(out) + NAD(+). Its function is as follows. NQR complex catalyzes the reduction of ubiquinone-1 to ubiquinol by two successive reactions, coupled with the transport of Na(+) ions from the cytoplasm to the periplasm. NqrA to NqrE are probably involved in the second step, the conversion of ubisemiquinone to ubiquinol. The polypeptide is Na(+)-translocating NADH-quinone reductase subunit E (Shewanella denitrificans (strain OS217 / ATCC BAA-1090 / DSM 15013)).